The chain runs to 216 residues: Endoplasmic reticulum vesicle protein 25 (216 aa).

A signal peptide spans 1–25; it reads MGSSRLAMRSALGLFFLLFVQISLA. Over 26-185 the chain is Lumenal; that stretch reads LKFDIAAGKG…TNESTNERVK (160 aa). The 91-residue stretch at 36–126 folds into the GOLD domain; it reads ERCIRNFVLK…HRSIELDVDI (91 aa). A helical transmembrane segment spans residues 186-206; that stretch reads WFAFGTMGMLVGLGVWQVIYL. Over 207-216 the chain is Cytoplasmic; sequence RAYFRSKHLI.

It belongs to the EMP24/GP25L family.

Its subcellular location is the endoplasmic reticulum membrane. The protein resides in the golgi apparatus membrane. In terms of biological role, constituent of COPII-coated endoplasmic reticulum-derived transport vesicles. Required for efficient transport of a subset of secretory proteins to the Golgi. Facilitates retrograde transport from the Golgi to the endoplasmic reticulum. The sequence is that of Endoplasmic reticulum vesicle protein 25 (erv25) from Emericella nidulans (strain FGSC A4 / ATCC 38163 / CBS 112.46 / NRRL 194 / M139) (Aspergillus nidulans).